The primary structure comprises 88 residues: Large ribosomal subunit protein eL34 (88 aa).

The protein belongs to the eukaryotic ribosomal protein eL34 family.

The protein is Large ribosomal subunit protein eL34 of Methanobrevibacter smithii (strain ATCC 35061 / DSM 861 / OCM 144 / PS).